We begin with the raw amino-acid sequence, 281 residues long: Kinetochore-associated protein NSL1 homolog (281 aa).

The residue at position 4 (S4) is a Phosphoserine. T244 is modified (phosphothreonine).

Component of the MIS12 complex composed of MIS12, DSN1, NSL1/DC8 and PMF1. Interacts with KNL1.

The protein resides in the nucleus. Its subcellular location is the chromosome. The protein localises to the centromere. It is found in the kinetochore. Its function is as follows. Part of the MIS12 complex which is required for normal chromosome alignment and segregation and kinetochore formation during mitosis. The polypeptide is Kinetochore-associated protein NSL1 homolog (NSL1) (Homo sapiens (Human)).